We begin with the raw amino-acid sequence, 408 residues long: Multidrug resistance protein MdtG (408 aa).

11 consecutive transmembrane segments (helical) span residues 16–36 (LIVAWLGCFLTGAAFSLVMPF), 58–78 (IVFSITFLFSAIASPFWGGLA), 92–112 (LGMGIVMVLMGLAQNIWQFLI), 115–135 (ALLGLLGGFVPNANALIATQV), 146–166 (TLSTGGVSGALLGPMAGGLLA), 173–193 (PVFFITASVLILCFFVTLFCI), 224–244 (LFVTTLIIQVATGSIAPILTL), 256–276 (VAFISGMIASVPGVAALLSAP), 290–310 (ILITALIFSVLLLIPMSYVQT), 319–339 (FLLGAADGALLPAVQTLLVYN), and 378–398 (AVFLVTAGVVLFNAVYSWNSL).

Belongs to the major facilitator superfamily. DHA1 family. MdtG (TC 2.A.1.2.20) subfamily.

Its subcellular location is the cell inner membrane. In terms of biological role, confers resistance to fosfomycin and deoxycholate. This is Multidrug resistance protein MdtG from Escherichia coli O139:H28 (strain E24377A / ETEC).